The chain runs to 193 residues: Mesogenin-1 (193 aa).

Positions 34 to 59 are disordered; that stretch reads GPFELNQASPSQSLSPAPSLESYSSS. The segment covering 40 to 59 has biased composition (low complexity); that stretch reads QASPSQSLSPAPSLESYSSS. Positions 124-178 constitute a bHLH domain; that stretch reads QRRRKASEREKLRMRTLADALHTLRNYLPPVYSQRGQPLTKIQTLKYTIKYIGEL.

The protein resides in the nucleus. Functionally, involved in specifying the paraxial, but not dorsal, mesoderm. May regulate the expression of T-box transcription factors required for mesoderm formation and differentiation. The sequence is that of Mesogenin-1 (MSGN1) from Homo sapiens (Human).